A 191-amino-acid chain; its full sequence is Thymidylate kinase (191 aa).

7 to 14 serves as a coordination point for ATP; it reads GVDGAGKS.

This sequence belongs to the thymidylate kinase family.

The enzyme catalyses dTMP + ATP = dTDP + ADP. Functionally, phosphorylation of dTMP to form dTDP in both de novo and salvage pathways of dTTP synthesis. The chain is Thymidylate kinase from Helicobacter pylori (strain Shi470).